Reading from the N-terminus, the 648-residue chain is Probable potassium transport system protein Kup 1 (648 aa).

Positions 1 to 31 are disordered; sequence MSDAVTDADGSSAQSHAQSAGHHAVQGHGGH. Residues 10 to 26 show a composition bias toward low complexity; sequence GSSAQSHAQSAGHHAVQ. Transmembrane regions (helical) follow at residues 39-59, 73-93, 130-150, 165-185, 193-213, 243-263, 275-295, 317-337, 364-384, 394-414, 421-441, and 446-466; these read LAVGAIGVVFGDIGTSPLYAL, LLHIYGIISLMFWSMMIIVTF, IILLGVFATALFYGDSMITPA, PDMHPLIVPLVVGILIGLFFI, VAAFFGPIMLVYFGTIAVLGA, FLAMGAAVLAVTGAEALYADM, WLVFVLPALVLNYLGQASLLI, LLFIASCAAVIASQAVISGAF, IFIPVINWALMIAVILLVLVF, YGIAVTGAMLIDNFLLAVVLF, APAAIAMLAVFFAIDAAYLGA, and IPDGGWVPLVMGIAIFTLLTT.

Belongs to the HAK/KUP transporter (TC 2.A.72) family.

It is found in the cell inner membrane. The enzyme catalyses K(+)(in) + H(+)(in) = K(+)(out) + H(+)(out). Functionally, transport of potassium into the cell. Likely operates as a K(+):H(+) symporter. In Novosphingobium aromaticivorans (strain ATCC 700278 / DSM 12444 / CCUG 56034 / CIP 105152 / NBRC 16084 / F199), this protein is Probable potassium transport system protein Kup 1.